Consider the following 468-residue polypeptide: Glycosyl hydrolase family 109 protein (468 aa).

Positions M1–A19 are cleaved as a signal peptide. Residues M67–R68, D89, W138–H141, E158–V159, and N187 contribute to the NAD(+) site. Substrate-binding positions include Y216, R232, Y244–H247, and Y322. Residue Y244 participates in NAD(+) binding.

The protein belongs to the Gfo/Idh/MocA family. Glycosyl hydrolase 109 subfamily. It depends on NAD(+) as a cofactor.

Its function is as follows. Glycosidase. The chain is Glycosyl hydrolase family 109 protein from Porphyromonas gingivalis (strain ATCC BAA-308 / W83).